We begin with the raw amino-acid sequence, 682 residues long: Transcription factor 12 (682 aa).

The short motif at 19-27 (DLLDFSAMF) is the 9aaTAD element. Disordered regions lie at residues 25–122 (AMFS…LYSR), 140–219 (LGSP…PPTS), and 281–313 (SVSP…ASHT). Composition is skewed to polar residues over residues 30-48 (PVNS…QFSG) and 56-76 (GTTS…SRGF). A phosphoserine mark is found at Ser47, Ser67, and Ser79. Basic and acidic residues predominate over residues 81-93 (HYSDHLNDSRLGA). Ser98 carries the phosphoserine modification. Polar residues-rich tracts occupy residues 101–121 (PFMN…SLYS) and 144–163 (AQLS…SATS). Lys110 participates in a covalent cross-link: Glycyl lysine isopeptide (Lys-Gly) (interchain with G-Cter in SUMO2). The residue at position 116 (Ser116) is a Phosphoserine. The segment at 119 to 140 (LYSRDTGLPGCQSSLLRQDLGL) is leucine-zipper. Residue Lys181 forms a Glycyl lysine isopeptide (Lys-Gly) (interchain with G-Cter in SUMO2) linkage. The interval 182 to 196 (KVRKVPPGLPSSVYA) is interaction with RUNX1T1. Residues 282 to 306 (VSPTDINTSLPPMSSFHRGSTSSSP) are compositionally biased toward polar residues. At Thr313 the chain carries Phosphothreonine. Residue Ser333 is modified to Phosphoserine. Disordered regions lie at residues 349 to 395 (PDHT…SLHS) and 462 to 580 (SASM…ERRM). The segment covering 352–363 (TSSSFPSNPSTP) has biased composition (low complexity). Polar residues-rich tracts occupy residues 364–376 (VGSP…TSQW) and 383–395 (APSS…SLHS). Residues 481–492 (SVLSSTVTTSST) are compositionally biased toward low complexity. Positions 506 to 517 (LQSQSGTVVTTE) are enriched in polar residues. Basic and acidic residues-rich tracts occupy residues 518–530 (IKTE…ENLH) and 536–551 (DDMK…DIKV). Lys519 is covalently cross-linked (Glycyl lysine isopeptide (Lys-Gly) (interchain with G-Cter in SUMO2)). Ser540 is modified (phosphoserine). A Glycyl lysine isopeptide (Lys-Gly) (interchain with G-Cter in SUMO2) cross-link involves residue Lys550. At Thr557 the chain carries Phosphothreonine. Ser558 and Ser559 each carry phosphoserine. Residues 568-580 (PEQKIEREKERRM) show a composition bias toward basic and acidic residues. Positions 577–630 (ERRMANNARERLRVRDINEAFKELGRMCQLHLKSEKPQTKLLILHQAVAVILSL) constitute a bHLH domain. Residues Lys609 and Lys653 each participate in a glycyl lysine isopeptide (Lys-Gly) (interchain with G-Cter in SUMO2) cross-link. The segment at 632–655 (QQVRERNLNPKAACLKRREEEKVS) is class A specific domain. The segment at 651–682 (EEKVSAVSAEPPTTLPGTHPGLSETTNPMGHM) is disordered. A compositionally biased stretch (low complexity) spans 661-672 (PPTTLPGTHPGL). Residues 673–682 (SETTNPMGHM) are compositionally biased toward polar residues.

In terms of assembly, efficient DNA binding requires dimerization with another bHLH protein. Forms homo- or heterooligomers with myogenin, E12 and ITF2 proteins. Interacts with PTF1A. Interacts with NEUROD2. Interacts with RUNX1T1. Interacts with AML1-MTG8/ETO (via nervy homology region 2 in oligomerized form). Interacts with BHLHA9. In terms of tissue distribution, expressed in several tissues and cell types including skeletal muscle, thymus, and a B-cell line.

It localises to the nucleus. In terms of biological role, transcriptional regulator. Involved in the initiation of neuronal differentiation. Activates transcription by binding to the E box (5'-CANNTG-3'). May be involved in the functional network that regulates the development of the GnRH axis. The protein is Transcription factor 12 (TCF12) of Homo sapiens (Human).